The following is a 239-amino-acid chain: Suppressor of organelle fusion 1 (239 aa).

It belongs to the WD repeat WDR91 family. Interacts with sorf-2; the interaction is direct. Interacts with bec-1.

It localises to the early endosome. The protein localises to the late endosome. It is found in the cytoplasm. Functionally, together with sorf-2 negatively regulates the levels of phosphatidylinositol 3-phosphate (PtdIns3P) to enable the conversion of early endosomes to late endosomes. Binds to sorf-2 and the sorf-1-sorf-2 complex likely acts through bec-1, a non-catalytic subunit of phosphatidylinositol 3-kinase (PI3K), to suppress PI3K activity, thereby negatively regulating endosomal PtdIns3P levels. This Caenorhabditis elegans protein is Suppressor of organelle fusion 1.